The sequence spans 151 residues: Large ribosomal subunit protein eL19 (151 aa).

Basic residues predominate over residues 57–81 (KKGISSARVKKLKEQRKKGRRRGPG). A disordered region spans residues 57–95 (KKGISSARVKKLKEQRKKGRRRGPGSRRGAAGARTPPKE).

This sequence belongs to the eukaryotic ribosomal protein eL19 family. Part of the 50S ribosomal subunit.

Functionally, binds to the 23S rRNA. The sequence is that of Large ribosomal subunit protein eL19 from Methanocaldococcus jannaschii (strain ATCC 43067 / DSM 2661 / JAL-1 / JCM 10045 / NBRC 100440) (Methanococcus jannaschii).